Consider the following 392-residue polypeptide: Glutamate 5-kinase (392 aa).

Residue K17 participates in ATP binding. Substrate-binding residues include S57, D144, and N156. Position 176–177 (176–177) interacts with ATP; it reads SD. Residues 282 to 359 enclose the PUA domain; the sequence is AGILSVDAGA…AEIEALLGYA (78 aa). The segment at 373 to 392 is disordered; that stretch reads TEQTGRKAGKSTKKKDEAHA.

Belongs to the glutamate 5-kinase family.

The protein localises to the cytoplasm. The catalysed reaction is L-glutamate + ATP = L-glutamyl 5-phosphate + ADP. It participates in amino-acid biosynthesis; L-proline biosynthesis; L-glutamate 5-semialdehyde from L-glutamate: step 1/2. Functionally, catalyzes the transfer of a phosphate group to glutamate to form L-glutamate 5-phosphate. The sequence is that of Glutamate 5-kinase from Allorhizobium ampelinum (strain ATCC BAA-846 / DSM 112012 / S4) (Agrobacterium vitis (strain S4)).